Reading from the N-terminus, the 1196-residue chain is RNA-dependent RNA polymerase 6 (1196 aa).

The protein belongs to the RdRP family. In terms of assembly, interacts with SGS3. Widely expressed.

It localises to the cytoplasmic granule. Its subcellular location is the nucleus. It carries out the reaction RNA(n) + a ribonucleoside 5'-triphosphate = RNA(n+1) + diphosphate. Its function is as follows. RNA-dependent RNA polymerase involved in post-transcriptional gene silencing (PTGS). Possesses ssRNA and ssDNA-dependent polymerase activity, but does not have priming activity. Possesses in vitro 3' nucleotidyltransferase activity in the presence of UTP as single nucleotide. Required for the production of 21 nucleotide trans-acting small interfering RNAs (ta-siRNAs) derived from TAS1, TAS2 and TAS3 endogenous transcripts. Acts in the RDR6/SGS3/DCL4/AGO7 ta-siRNA pathway involved in leaf developmental timing. Required for the production of natural siRNAs (nat-siRNAs) derived from cis-natural antisense transcripts. Required for the production of 24 nucleotide nat-siRNAs derived from the stress-related P5CDH-SRO5 antisense gene pair. Required for PTGS induced by transgene direct repeats. Plays an essential role in transitive silencing of transgenes by processing secondary siRNAs. This pathway, which requires DCL2 and DCL4, amplifies silencing by using the target RNA as substrate to generate secondary siRNAs, providing an efficient mechanism for long-distance silencing. Involved in the biogenesis of secondary siRNAs which require 22 nucleotide miRNAs associated to AGO1. Participates synergistically with AS1 and AS2 to proper plant development by repressing the miR165 and miR166 microRNAs (independently of AGO10) that may lead to mRNA degradation of genes in the class III HD-ZIP family. Required for the production of some small RNAs derived from the crucifer-infecting tobamovirus (TMV-cg). Required for sense virus-induced post-transcriptional gene silencing (S-PTGS). The protein is RNA-dependent RNA polymerase 6 (RDR6) of Arabidopsis thaliana (Mouse-ear cress).